The chain runs to 339 residues: MIEKNWQELIRPMKPEIEPGHDPARQAKIVAEPLERGFGMTLGNALRRVLLSSLQGAAVTNVHIDGVVHEFSSIDGVREDVTDIVLNIKQIALRMHGEGPKRVVLKKSGPGIVTAGDIEETADVEIVNKDLALCTLDEGAEIRMEFTINTGKGYVPSERNRPEDAPIGLIGVDALYSPVKRVSYKVENTREGQVLDYDKLTLEVETDGTVTPEDSVAFAARILQDQFQIFINFEEAVEARPAEDDKPELDFNPALLRKVDELELSVRSANCLKNDNIVYIGDLIQKSEAEMLRTPNFGRKSLNEIKEVLAQMGLHLGMEAPNWPPENIEDLAKRFEDHV.

The interval 1–234 is alpha N-terminal domain (alpha-NTD); that stretch reads MIEKNWQELI…DQFQIFINFE (234 aa). Residues 251 to 339 form an alpha C-terminal domain (alpha-CTD) region; the sequence is FNPALLRKVD…DLAKRFEDHV (89 aa).

This sequence belongs to the RNA polymerase alpha chain family. Homodimer. The RNAP catalytic core consists of 2 alpha, 1 beta, 1 beta' and 1 omega subunit. When a sigma factor is associated with the core the holoenzyme is formed, which can initiate transcription.

It catalyses the reaction RNA(n) + a ribonucleoside 5'-triphosphate = RNA(n+1) + diphosphate. DNA-dependent RNA polymerase catalyzes the transcription of DNA into RNA using the four ribonucleoside triphosphates as substrates. This Maricaulis maris (strain MCS10) (Caulobacter maris) protein is DNA-directed RNA polymerase subunit alpha.